The chain runs to 285 residues: 3-methyl-2-oxobutanoate hydroxymethyltransferase 1 (285 aa).

Residues aspartate 49 and aspartate 88 each contribute to the Mg(2+) site. 3-methyl-2-oxobutanoate contacts are provided by residues 49-50 (DS), aspartate 88, and lysine 118. Residue glutamate 120 participates in Mg(2+) binding. Glutamate 187 serves as the catalytic Proton acceptor.

The protein belongs to the PanB family. As to quaternary structure, homodecamer; pentamer of dimers. It depends on Mg(2+) as a cofactor.

The protein resides in the cytoplasm. The enzyme catalyses 3-methyl-2-oxobutanoate + (6R)-5,10-methylene-5,6,7,8-tetrahydrofolate + H2O = 2-dehydropantoate + (6S)-5,6,7,8-tetrahydrofolate. The protein operates within cofactor biosynthesis; (R)-pantothenate biosynthesis; (R)-pantoate from 3-methyl-2-oxobutanoate: step 1/2. Catalyzes the reversible reaction in which hydroxymethyl group from 5,10-methylenetetrahydrofolate is transferred onto alpha-ketoisovalerate to form ketopantoate. The protein is 3-methyl-2-oxobutanoate hydroxymethyltransferase 1 of Burkholderia lata (strain ATCC 17760 / DSM 23089 / LMG 22485 / NCIMB 9086 / R18194 / 383).